Here is a 90-residue protein sequence, read N- to C-terminus: Progonadoliberin-1 (90 aa).

The signal sequence occupies residues 1–24; it reads MSRHVTVVLLLAIVLLLSSHMIHG. Glutamine 25 is subject to Pyrrolidone carboxylic acid. Glycine amide is present on glycine 34.

Belongs to the GnRH family. As to expression, forebrain.

The protein localises to the secreted. Stimulates the secretion of gonadotropins. The polypeptide is Progonadoliberin-1 (gnrh1) (Aquarana catesbeiana (American bullfrog)).